A 97-amino-acid chain; its full sequence is Citrate lyase acyl carrier protein (97 aa).

Ser-14 is modified (O-(phosphoribosyl dephospho-coenzyme A)serine).

The protein belongs to the CitD family. In terms of assembly, oligomer with a subunit composition of (alpha,beta,gamma)6.

The protein localises to the cytoplasm. In terms of biological role, covalent carrier of the coenzyme of citrate lyase. This Leuconostoc citreum (strain KM20) protein is Citrate lyase acyl carrier protein.